The following is a 326-amino-acid chain: MGEAINLLINSKILAPLIMGFLFSIVLGPIFIPILHKLKFGQNIRKEGPKSHQKKSGTPTMGGLIFFIATATAILIMGQKPMSREMILLYSFLAFGFIGFLDDILKIIHKDNLGLRAAQKMILLVLFSVALAWYGYTNVGTDILIPFINQNFRLNLGILYIPFIVVYYAAVTNAVNLTDGIDGLATSVTVIVLTFFAIIGFRTQNVEVAVFAIALAGALLGFLKFNAFPAKIFMGDTGSLALGGVIGTIALMLKMELFVIIVGGIYLIETLSVIIQVTSFKLTGKRVFRMSPIHHHFEQVGWSEVKIVTIFSSITAILCIIGFVAL.

10 helical membrane passes run 13 to 33 (ILAPLIMGFLFSIVLGPIFIP), 57 to 77 (GTPTMGGLIFFIATATAILIM), 85 to 105 (EMILLYSFLAFGFIGFLDDIL), 121 to 141 (MILLVLFSVALAWYGYTNVGT), 155 to 175 (NLGILYIPFIVVYYAAVTNAV), 181 to 201 (IDGLATSVTVIVLTFFAIIGF), 208 to 228 (VAVFAIALAGALLGFLKFNAF), 232 to 252 (IFMGDTGSLALGGVIGTIALM), 257 to 277 (LFVIIVGGIYLIETLSVIIQV), and 305 to 325 (VKIVTIFSSITAILCIIGFVA).

It belongs to the glycosyltransferase 4 family. MraY subfamily. Requires Mg(2+) as cofactor.

The protein resides in the cell membrane. The catalysed reaction is UDP-N-acetyl-alpha-D-muramoyl-L-alanyl-gamma-D-glutamyl-meso-2,6-diaminopimeloyl-D-alanyl-D-alanine + di-trans,octa-cis-undecaprenyl phosphate = di-trans,octa-cis-undecaprenyl diphospho-N-acetyl-alpha-D-muramoyl-L-alanyl-D-glutamyl-meso-2,6-diaminopimeloyl-D-alanyl-D-alanine + UMP. It participates in cell wall biogenesis; peptidoglycan biosynthesis. Its function is as follows. Catalyzes the initial step of the lipid cycle reactions in the biosynthesis of the cell wall peptidoglycan: transfers peptidoglycan precursor phospho-MurNAc-pentapeptide from UDP-MurNAc-pentapeptide onto the lipid carrier undecaprenyl phosphate, yielding undecaprenyl-pyrophosphoryl-MurNAc-pentapeptide, known as lipid I. The sequence is that of Phospho-N-acetylmuramoyl-pentapeptide-transferase from Clostridium beijerinckii (strain ATCC 51743 / NCIMB 8052) (Clostridium acetobutylicum).